A 77-amino-acid polypeptide reads, in one-letter code: MSFFDIFKKKKSKDVAKDRLMMMLAYERANTKIENLDEMKKDLINVVKKYLNVKDVHIKSNSNQDIETLEVEIILNK.

It belongs to the MinE family.

In terms of biological role, prevents the cell division inhibition by proteins MinC and MinD at internal division sites while permitting inhibition at polar sites. This ensures cell division at the proper site by restricting the formation of a division septum at the midpoint of the long axis of the cell. The sequence is that of Cell division topological specificity factor from Nautilia profundicola (strain ATCC BAA-1463 / DSM 18972 / AmH).